A 952-amino-acid chain; its full sequence is Leucine--tRNA ligase (952 aa).

Positions 66 to 77 (PYPSGAGLHVGH) match the 'HIGH' region motif. The 'KMSKS' region signature appears at 722–726 (KMGKS). Lysine 725 serves as a coordination point for ATP.

This sequence belongs to the class-I aminoacyl-tRNA synthetase family.

It localises to the cytoplasm. It catalyses the reaction tRNA(Leu) + L-leucine + ATP = L-leucyl-tRNA(Leu) + AMP + diphosphate. The chain is Leucine--tRNA ligase from Corynebacterium glutamicum (strain R).